The chain runs to 229 residues: Germin-like protein subfamily 1 member 7 (229 aa).

A signal peptide spans 1 to 24 (MEGFLRFLVAKAILLALASSFVSC). Cysteines 34 and 50 form a disulfide. The Cupin type-1 domain occupies 64–215 (SGLNIAGNTI…AFQLDVNVVK (152 aa)). A glycan (N-linked (GlcNAc...) asparagine) is linked at asparagine 79. Mn(2+) contacts are provided by histidine 112, histidine 114, glutamate 119, and histidine 161.

Belongs to the germin family. As to quaternary structure, oligomer (believed to be a pentamer but probably hexamer).

The protein resides in the secreted. Its subcellular location is the extracellular space. It localises to the apoplast. May play a role in plant defense. Probably has no oxalate oxidase activity even if the active site is conserved. The chain is Germin-like protein subfamily 1 member 7 from Arabidopsis thaliana (Mouse-ear cress).